The following is a 141-amino-acid chain: MAKKVTGVVKLQLPAGKATPAPPVGPALGGYGINIMAFVKEYNEKTASQAGSIIPVEVTIYSDRSFTITLKTPPAADLLRKAAGIEKGSGTPNRKIAGTITAKQLRQVAEQKMSDLNAQSIEAAEKIIAGTARSMGIKIVE.

The protein belongs to the universal ribosomal protein uL11 family. As to quaternary structure, part of the ribosomal stalk of the 50S ribosomal subunit. Interacts with L10 and the large rRNA to form the base of the stalk. L10 forms an elongated spine to which L12 dimers bind in a sequential fashion forming a multimeric L10(L12)X complex. One or more lysine residues are methylated.

Functionally, forms part of the ribosomal stalk which helps the ribosome interact with GTP-bound translation factors. The polypeptide is Large ribosomal subunit protein uL11 (Roseiflexus castenholzii (strain DSM 13941 / HLO8)).